The primary structure comprises 339 residues: Ornithine carbamoyltransferase (339 aa).

Carbamoyl phosphate-binding positions include 56-59 (STRT), Arg107, and 134-137 (HPTQ). Residues Asn168, Asp232, and 236-237 (SM) contribute to the L-ornithine site. Carbamoyl phosphate contacts are provided by residues 274–275 (CL) and Arg320.

This sequence belongs to the aspartate/ornithine carbamoyltransferase superfamily. OTCase family.

Its subcellular location is the cytoplasm. The enzyme catalyses carbamoyl phosphate + L-ornithine = L-citrulline + phosphate + H(+). It functions in the pathway amino-acid biosynthesis; L-arginine biosynthesis; L-arginine from L-ornithine and carbamoyl phosphate: step 1/3. In terms of biological role, reversibly catalyzes the transfer of the carbamoyl group from carbamoyl phosphate (CP) to the N(epsilon) atom of ornithine (ORN) to produce L-citrulline. The polypeptide is Ornithine carbamoyltransferase (Buchnera aphidicola subsp. Baizongia pistaciae (strain Bp)).